Reading from the N-terminus, the 230-residue chain is Geranylgeranylglyceryl phosphate synthase (230 aa).

Residue K13 participates in sn-glycerol 1-phosphate binding. Mg(2+) is bound by residues D15 and T41. Residues 161–166, G191, and 211–212 each bind sn-glycerol 1-phosphate; these read YIEYSG and GN.

This sequence belongs to the GGGP/HepGP synthase family. Group I subfamily. Mg(2+) is required as a cofactor.

Its subcellular location is the cytoplasm. It catalyses the reaction sn-glycerol 1-phosphate + (2E,6E,10E)-geranylgeranyl diphosphate = sn-3-O-(geranylgeranyl)glycerol 1-phosphate + diphosphate. Its pathway is membrane lipid metabolism; glycerophospholipid metabolism. Its function is as follows. Prenyltransferase that catalyzes the transfer of the geranylgeranyl moiety of geranylgeranyl diphosphate (GGPP) to the C3 hydroxyl of sn-glycerol-1-phosphate (G1P). This reaction is the first ether-bond-formation step in the biosynthesis of archaeal membrane lipids. The polypeptide is Geranylgeranylglyceryl phosphate synthase (Methanoculleus marisnigri (strain ATCC 35101 / DSM 1498 / JR1)).